The sequence spans 669 residues: Filensin (669 aa).

The head stretch occupies residues 1–33 (MYRRSYVFQARQERYERAQPAGPAAQPGGTAPG). Residue serine 5 is modified to Phosphoserine. An IF rod domain is found at 33–318 (GLAALQALGE…RIIEIEGSRL (286 aa)). Residues 34–68 (LAALQALGERVAVQVQRARALQQRHAGLRRQLDAF) are coil 1A. At alanine 35 the chain carries N-acetylalanine. The linker 1 stretch occupies residues 69–77 (QRLGEQPGP). Residues 78–177 (EDALARHVEA…RYKKNLLEIQ (100 aa)) form a coil 1B region. A linker 12 region spans residues 178-194 (TYITVLQQIVQTAPQVS). Positions 195-318 (LVTGMRESGL…RIIEIEGSRL (124 aa)) are coil 2. A tail region spans residues 319-669 (SSVFIETPIS…GEKSLPDTRA (351 aa)). At serine 339 the chain carries Phosphoserine. Disordered stretches follow at residues 380–435 (VEET…GGQI), 449–468 (RVSG…FTKG), and 505–618 (HHDG…KALS). Residues 408-417 (SQPGAGGGHG) are compositionally biased toward gly residues. Glycine 432 carries the N-myristoyl glycine lipid modification. Serine 513 carries the post-translational modification Phosphoserine. Positions 545–570 (NGLRAKEPKDLEEKDDDGKKEAEGSR) are enriched in basic and acidic residues. Over residues 583 to 593 (PSTSHSQTSGS) the composition is skewed to polar residues. Phosphothreonine is present on threonine 585.

The protein belongs to the intermediate filament family. In terms of assembly, part of a complex required for lens intermediate filament formation composed of BFSP1, BFSP2 and CRYAA. Identified in a complex that contains VIM, EZR, AHNAK, BFSP1, BFSP2, ANK2, PLEC, PRX and spectrin. Found in a complex composed of PPL (via C-terminal linker domain), BFSP1 and BFSP2 in the retinal lens. Within the complex interacts with BFSP2. Interacts (via C-terminus) with MIP (via C-terminus) in aged lens fiber cells. Post-translationally, proteolytically cleaved during lens cell fiber differentiation with increased fragmentation as fiber cell age increases. In terms of processing, myristoylated at Gly-432 following proteolytic cleavage at Asp-431. Acetylated at Ala-35 following proteolytic cleavage at Leu-34. As to expression, detected in eye lens fiber cells (at protein level). Expressed in retinal lens epithelial cells (at protein level).

The protein localises to the cell membrane. It is found in the cytoplasm. It localises to the cytoskeleton. Its subcellular location is the cell cortex. Required for the correct formation of lens intermediate filaments as part of a complex composed of BFSP1, BFSP2 and CRYAA. Involved in altering the calcium regulation of MIP water permeability. This is Filensin (Bfsp1) from Mus musculus (Mouse).